A 367-amino-acid chain; its full sequence is MSLADQVLAVNDDLPIRTDKPVHSGKVRSVYWLTEEDSQRLIKEKGYDVAPDAPLAIMVISDRISAFDCIWRGEGNLKGVPGKGAALNAISNHWFKLFKDNGLADSHILDIPHPFVWIVQKARPVMIEAICRQYITGSMWRAYANGEREFCGIEMPEGLEKDKKLPELLITPSTKGILKGIPGVPEADDVNITRNNIEDNFAAFNFTQASDIAHYEKLLKEGFNVISQALANVDQTFVDTKFEFGYVNDAQGKEKLIYMDEVGTPDSSRIWDTQEYNKGNIVENSKEGFRQFLLNYFPDADILLNKERMPEREALARDNELPLDSLMSLSRTYLDIAAKITGAEIVLSENPKQEIIDVLRADYGLID.

It belongs to the SAICAR synthetase family.

The catalysed reaction is 5-amino-1-(5-phospho-D-ribosyl)imidazole-4-carboxylate + L-aspartate + ATP = (2S)-2-[5-amino-1-(5-phospho-beta-D-ribosyl)imidazole-4-carboxamido]succinate + ADP + phosphate + 2 H(+). Its pathway is purine metabolism; IMP biosynthesis via de novo pathway; 5-amino-1-(5-phospho-D-ribosyl)imidazole-4-carboxamide from 5-amino-1-(5-phospho-D-ribosyl)imidazole-4-carboxylate: step 1/2. The chain is Phosphoribosylaminoimidazole-succinocarboxamide synthase from Vibrio atlanticus (strain LGP32) (Vibrio splendidus (strain Mel32)).